Here is a 502-residue protein sequence, read N- to C-terminus: ATP synthase subunit alpha (502 aa).

An ATP-binding site is contributed by glycine 169–threonine 176.

This sequence belongs to the ATPase alpha/beta chains family. F-type ATPases have 2 components, CF(1) - the catalytic core - and CF(0) - the membrane proton channel. CF(1) has five subunits: alpha(3), beta(3), gamma(1), delta(1), epsilon(1). CF(0) has three main subunits: a(1), b(2) and c(9-12). The alpha and beta chains form an alternating ring which encloses part of the gamma chain. CF(1) is attached to CF(0) by a central stalk formed by the gamma and epsilon chains, while a peripheral stalk is formed by the delta and b chains.

It is found in the cell membrane. The enzyme catalyses ATP + H2O + 4 H(+)(in) = ADP + phosphate + 5 H(+)(out). Its function is as follows. Produces ATP from ADP in the presence of a proton gradient across the membrane. The alpha chain is a regulatory subunit. The chain is ATP synthase subunit alpha from Clostridium perfringens (strain ATCC 13124 / DSM 756 / JCM 1290 / NCIMB 6125 / NCTC 8237 / Type A).